We begin with the raw amino-acid sequence, 165 residues long: V-type proton ATPase subunit c2 (165 aa).

The Lumenal segment spans residues 1 to 12 (MASTFSGDETAP). A helical transmembrane segment spans residues 13–33 (FFGFLGAAAALVFSCMGAAYG). The Cytoplasmic segment spans residues 34–55 (TAKSGVGVASMGVMRPELVMKS). The helical transmembrane segment at 56–76 (IVPVVMAGVLGIYGLIIAVII) threads the bilayer. The Lumenal portion of the chain corresponds to 77–95 (STGINPKAKSYYLFDGYAH). A helical membrane pass occupies residues 96 to 117 (LSSGLACGLAGLSAGMAIGIVG). Residues 118–129 (DAGVRANAQQPK) lie on the Cytoplasmic side of the membrane. Residues 130 to 155 (LFVGMILILIFAEALALYGLIVGIIL) traverse the membrane as a helical segment. Residues 156-165 (SSRAGQSRAE) lie on the Lumenal side of the membrane.

Belongs to the V-ATPase proteolipid subunit family. As to quaternary structure, V-ATPase is a heteromultimeric enzyme composed of a peripheral catalytic V1 complex (components A to H) attached to an integral membrane V0 proton pore complex (components: a, c, c'', d and e). The proteolipid components c and c'' are present as a hexameric ring that forms the proton-conducting pore. Expressed in leaf, root, flower and silique, with lower expression in roots.

Its subcellular location is the vacuole membrane. In terms of biological role, proton-conducting pore forming subunit of the membrane integral V0 complex of vacuolar ATPase. V-ATPase is responsible for acidifying a variety of intracellular compartments in eukaryotic cells. The sequence is that of V-type proton ATPase subunit c2 (VHA-c2) from Arabidopsis thaliana (Mouse-ear cress).